Consider the following 251-residue polypeptide: D-aminoacyl-tRNA deacylase (251 aa).

This sequence belongs to the DtdA deacylase family. In terms of assembly, monomer. It depends on Zn(2+) as a cofactor.

It carries out the reaction a D-aminoacyl-tRNA + H2O = a tRNA + a D-alpha-amino acid + H(+). It catalyses the reaction glycyl-tRNA(Ala) + H2O = tRNA(Ala) + glycine + H(+). D-aminoacyl-tRNA deacylase with broad substrate specificity. By recycling D-aminoacyl-tRNA to D-amino acids and free tRNA molecules, this enzyme counteracts the toxicity associated with the formation of D-aminoacyl-tRNA entities in vivo. This chain is D-aminoacyl-tRNA deacylase, found in Pyrobaculum aerophilum (strain ATCC 51768 / DSM 7523 / JCM 9630 / CIP 104966 / NBRC 100827 / IM2).